Here is a 74-residue protein sequence, read N- to C-terminus: uncharacterized protein (74 aa).

Positions 1 to 19 (MIGLIVVPILFAIKGIVVG) are cleaved as a signal peptide. The segment at 26–74 (KFGKHSNTKDQKEDKDEDKRQSISQRKQHTEWPIEENRIQRRAPNQSAL) is disordered. Composition is skewed to basic and acidic residues over residues 32 to 46 (NTKD…DKRQ) and 53 to 64 (QHTEWPIEENRI).

This is an uncharacterized protein from Saccharomyces cerevisiae (strain ATCC 204508 / S288c) (Baker's yeast).